A 305-amino-acid polypeptide reads, in one-letter code: tRNA dimethylallyltransferase (305 aa).

Residue 8 to 15 participates in ATP binding; that stretch reads GPTGTGKS. Position 10 to 15 (10 to 15) interacts with substrate; sequence TGTGKS.

The protein belongs to the IPP transferase family. In terms of assembly, monomer. Mg(2+) serves as cofactor.

The enzyme catalyses adenosine(37) in tRNA + dimethylallyl diphosphate = N(6)-dimethylallyladenosine(37) in tRNA + diphosphate. Its function is as follows. Catalyzes the transfer of a dimethylallyl group onto the adenine at position 37 in tRNAs that read codons beginning with uridine, leading to the formation of N6-(dimethylallyl)adenosine (i(6)A). This chain is tRNA dimethylallyltransferase, found in Mycobacterium sp. (strain KMS).